A 109-amino-acid polypeptide reads, in one-letter code: Non-structural protein of 12.7 kDa (109 aa).

Belongs to the coronaviruses ns12.7 protein family.

The chain is Non-structural protein of 12.7 kDa from Sus scrofa (Pig).